We begin with the raw amino-acid sequence, 185 residues long: Peptidyl-tRNA hydrolase (185 aa).

Residue Tyr14 coordinates tRNA. The Proton acceptor role is filled by His19. TRNA is bound by residues Phe64, Asn66, and Asn112.

This sequence belongs to the PTH family. As to quaternary structure, monomer.

Its subcellular location is the cytoplasm. It carries out the reaction an N-acyl-L-alpha-aminoacyl-tRNA + H2O = an N-acyl-L-amino acid + a tRNA + H(+). Its function is as follows. Hydrolyzes ribosome-free peptidyl-tRNAs (with 1 or more amino acids incorporated), which drop off the ribosome during protein synthesis, or as a result of ribosome stalling. Catalyzes the release of premature peptidyl moieties from peptidyl-tRNA molecules trapped in stalled 50S ribosomal subunits, and thus maintains levels of free tRNAs and 50S ribosomes. The polypeptide is Peptidyl-tRNA hydrolase (Lacticaseibacillus casei (strain BL23) (Lactobacillus casei)).